Reading from the N-terminus, the 30-residue chain is GLPCGESCVYIPCISTVLGCSCSNKVCYRN.

The segment at residues 1–30 (GLPCGESCVYIPCISTVLGCSCSNKVCYRN) is a cross-link (cyclopeptide (Gly-Asn)). 3 disulfide bridges follow: Cys4–Cys20, Cys8–Cys22, and Cys13–Cys27.

This is a cyclic peptide. Detected in seeds (at protein level).

Functionally, probably participates in a plant defense mechanism. This chain is Cyclotide hyen-F, found in Pigea enneasperma (Spade flower).